Here is a 441-residue protein sequence, read N- to C-terminus: ATP-dependent RNA helicase SUB2-1 (441 aa).

A compositionally biased stretch (acidic residues) spans 1-19; it reads MSHEGEEDLLEYSDNEQDI. Residues 1-46 are disordered; the sequence is MSHEGEEDLLEYSDNEQDIQVDASKAAEPSELDATTAEDASNGDAE. Positions 57 to 85 match the Q motif motif; the sequence is TGFKDFLLKPELARAIIDCGFEHPSEVQQ. The region spanning 88 to 263 is the Helicase ATP-binding domain; that stretch reads IPQSIHGTDV…RRFLQNPLEI (176 aa). 101-108 is an ATP binding site; sequence AKSGLGKT. Positions 210–213 match the DECD box motif; that stretch reads DECD. The Helicase C-terminal domain occupies 291–436; sequence KLAQLLDDLE…EFPEEGIDPS (146 aa).

The protein belongs to the DEAD box helicase family. DECD subfamily.

The protein resides in the nucleus. It carries out the reaction ATP + H2O = ADP + phosphate + H(+). ATP-binding RNA helicase involved in transcription elongation and required for the export of mRNA out of the nucleus. SUB2 also plays a role in pre-mRNA splicing and spliceosome assembly. May be involved in rDNA and telomeric silencing, and maintenance of genome integrity. The polypeptide is ATP-dependent RNA helicase SUB2-1 (SUB2-1) (Vanderwaltozyma polyspora (strain ATCC 22028 / DSM 70294 / BCRC 21397 / CBS 2163 / NBRC 10782 / NRRL Y-8283 / UCD 57-17) (Kluyveromyces polysporus)).